A 683-amino-acid polypeptide reads, in one-letter code: MSAFKARGVENPSYEDPDEKQKPDLEMSKTNGIGVDNPSYYKNPEKYLGNENEEGKSNNDNEEEEEGEEDQGAVERCVNKFYGGIHNFYKRNKKIIHYTFLGLLLVGYFALVIAACIVNFKQSLALLVLTLIAIFFFFWDLFIAKYGDKIAEALKPCQKFLDNHWSIIRWFVYGALLLAVILWLTLDTAKRGANQVIPFFGLILYILLVFIFSKHPTKVRWRIVIWGLLLQFIFGLIILRTKPGLDAFNWLGIQVQTFLKYTDAGSRFLFGDDFQDHFFAFAVLPIVIFFSTVMSMMYYLGLMQWLILKVGWLMQITMGTSPMESMVSAGNIFVGQTESPLLIRPYLADLTISEMHSVMSSGFATIAGSVLGAYISLGIPAAHLLTASVMSAPAALAISKTFWPETKKSKNSTQTSIKLEKGQENNLVEAASQGASAAVPLVANIAANLIAFLAVLAFINATLSWLGSMFNYPQFSFEIICSYVLMPFAFMMGVNYDDSFLVAELLGMKTFFNEFVAYQRLSEYIHNRESGGPLFVDGVRQYMSVRSEAIATYALCGFANFGSLGIMIGGLSSLAPHRKSDIASCGIRALIAGTIACFSTACIAGVLYIPELYCPNLLMSTLFENGTTVNTTNLMSCCTDLFKSTTMLTPKNITFTEGFNTTMLNGCCTFFPSGFNCSEVRPE.

Residues 1-71 are disordered; the sequence is MSAFKARGVE…EEEEEGEEDQ (71 aa). Residues 1-97 are Cytoplasmic-facing; sequence MSAFKARGVE…FYKRNKKIIH (97 aa). Positions 60 to 71 are enriched in acidic residues; the sequence is DNEEEEEGEEDQ. A helical membrane pass occupies residues 98–118; sequence YTFLGLLLVGYFALVIAACIV. The Extracellular portion of the chain corresponds to 119–123; sequence NFKQS. Residues 124 to 144 traverse the membrane as a helical segment; that stretch reads LALLVLTLIAIFFFFWDLFIA. At 145–168 the chain is on the cytoplasmic side; sequence KYGDKIAEALKPCQKFLDNHWSII. A helical transmembrane segment spans residues 169 to 189; the sequence is RWFVYGALLLAVILWLTLDTA. The Extracellular segment spans residues 190–192; that stretch reads KRG. Residues 193–214 traverse the membrane as a helical segment; that stretch reads ANQVIPFFGLILYILLVFIFSK. The Cytoplasmic portion of the chain corresponds to 215 to 222; it reads HPTKVRWR. The helical transmembrane segment at 223 to 242 threads the bilayer; the sequence is IVIWGLLLQFIFGLIILRTK. Residues 243–279 lie on the Extracellular side of the membrane; it reads PGLDAFNWLGIQVQTFLKYTDAGSRFLFGDDFQDHFF. A helical transmembrane segment spans residues 280–300; the sequence is AFAVLPIVIFFSTVMSMMYYL. The Cytoplasmic segment spans residues 301-324; sequence GLMQWLILKVGWLMQITMGTSPME. Residues 325–343 constitute an intramembrane region (helical); that stretch reads SMVSAGNIFVGQTESPLLI. The Cytoplasmic portion of the chain corresponds to 344–356; that stretch reads RPYLADLTISEMH. A helical transmembrane segment spans residues 357–379; that stretch reads SVMSSGFATIAGSVLGAYISLGI. The Extracellular segment spans residues 380 to 381; sequence PA. A helical membrane pass occupies residues 382–403; sequence AHLLTASVMSAPAALAISKTFW. Over 404 to 438 the chain is Cytoplasmic; the sequence is PETKKSKNSTQTSIKLEKGQENNLVEAASQGASAA. Residues 439 to 464 traverse the membrane as a helical segment; it reads VPLVANIAANLIAFLAVLAFINATLS. The Extracellular segment spans residues 465–502; that stretch reads WLGSMFNYPQFSFEIICSYVLMPFAFMMGVNYDDSFLV. An intramembrane region (helical) is located at residues 503-522; sequence AELLGMKTFFNEFVAYQRLS. At 523 to 561 the chain is on the extracellular side; that stretch reads EYIHNRESGGPLFVDGVRQYMSVRSEAIATYALCGFANF. A helical transmembrane segment spans residues 562–572; that stretch reads GSLGIMIGGLS. Topologically, residues 573 to 585 are cytoplasmic; the sequence is SLAPHRKSDIASC. Residues 586 to 608 form a helical membrane-spanning segment; the sequence is GIRALIAGTIACFSTACIAGVLY. At 609–683 the chain is on the extracellular side; that stretch reads IPELYCPNLL…GFNCSEVRPE (75 aa).

The protein belongs to the concentrative nucleoside transporter (CNT) (TC 2.A.41) family. Homotrimer.

It localises to the cell membrane. The catalysed reaction is thymidine(out) + 2 Na(+)(out) = thymidine(in) + 2 Na(+)(in). It catalyses the reaction cytidine(out) + 2 Na(+)(out) = cytidine(in) + 2 Na(+)(in). The enzyme catalyses uridine(out) + 2 Na(+)(out) = uridine(in) + 2 Na(+)(in). It carries out the reaction adenosine(out) + 2 Na(+)(out) = adenosine(in) + 2 Na(+)(in). The catalysed reaction is guanosine(out) + 2 Na(+)(out) = guanosine(in) + 2 Na(+)(in). It catalyses the reaction inosine(out) + 2 Na(+)(out) = inosine(in) + 2 Na(+)(in). Functionally, sodium-dependent, pyrimidine- and purine-selective. Involved in the homeostasis of endogenous nucleosides. Exhibits the transport characteristics of the nucleoside transport system cib or N3 subtype (N3/cib) (with marked transport of both thymidine and inosine). Employs a 2:1 sodium/nucleoside ratio. Also able to transport gemcitabine, 3'-azido-3'-deoxythymidine (AZT), ribavirin and 3-deazauridine. This Eptatretus stoutii (Pacific hagfish) protein is Solute carrier family 28 member 3 (SLC28A3).